We begin with the raw amino-acid sequence, 621 residues long: DnaJ homolog subfamily C member 2 (621 aa).

M1 bears the N-acetylmethionine mark. Phosphoserine occurs at positions 47, 49, 60, and 63. The region spanning 88-161 (DHYAVLGLGH…VKRRAFNSVD (74 aa)) is the J domain. The ZRF1-UBD stretch occupies residues 160 to 250 (VDPTFDNSVP…RDERRWIEKQ (91 aa)). The residue at position 183 (S183) is a Phosphoserine. 2 disordered regions span residues 294–315 (EKKAKAEAKRKEQEAKEKQRQA) and 427–453 (EEAEAHMRQASKNTEKSAGGGGNGSKN). SANT domains follow at residues 449-511 (NGSK…KLDP) and 549-604 (TDFT…EMVK).

In terms of assembly, component of ribosome-associated complex (RAC), a heterodimer composed of Hsp70/DnaK-type chaperone HSPA14 and Hsp40/DnaJ-type chaperone DNAJC2. Interacts (via ZRF1-UBD region) with ID1. Phosphorylated in M (mitotic) phase.

It localises to the nucleus. The protein localises to the cytoplasm. Its subcellular location is the cytosol. In terms of biological role, acts both as a chaperone in the cytosol and as a chromatin regulator in the nucleus. When cytosolic, acts as a molecular chaperone: component of the ribosome-associated complex (RAC), a complex involved in folding or maintaining nascent polypeptides in a folding-competent state. In the RAC complex, stimulates the ATPase activity of the ribosome-associated pool of Hsp70-type chaperones HSPA14 that bind to the nascent polypeptide chain. When nuclear, mediates the switching from polycomb-repressed genes to an active state: specifically recruited at histone H2A ubiquitinated at 'Lys-119' (H2AK119ub), and promotes the displacement of the polycomb PRC1 complex from chromatin, thereby facilitating transcription activation. This is DnaJ homolog subfamily C member 2 (DNAJC2) from Macaca fascicularis (Crab-eating macaque).